The primary structure comprises 456 residues: Chromosomal replication initiator protein DnaA 1 (456 aa).

A domain I, interacts with DnaA modulators region spans residues 1-68; the sequence is MRAWEEFLLL…KANLINNNGK (68 aa). The domain II stretch occupies residues 68–101; that stretch reads KPIRVRVTSLDKSTPFKESQIQQEKTAYFTMQYG. Positions 102 to 320 are domain III, AAA+ region; sequence DIDPQMSFAN…HALTTLAKRV (219 aa). ATP-binding residues include serine 150, glycine 152, lysine 153, and threonine 154. Residues 321–456 are domain IV, binds dsDNA; it reads AYKKLSHQLL…AYQSLDLIVD (136 aa).

It belongs to the DnaA family. In terms of assembly, oligomerizes as a right-handed, spiral filament on DNA at oriC.

It localises to the cytoplasm. Plays an essential role in the initiation and regulation of chromosomal replication. ATP-DnaA binds to the origin of replication (oriC) to initiate formation of the DNA replication initiation complex once per cell cycle. Binds the DnaA box (a 9 base pair repeat at the origin) and separates the double-stranded (ds)DNA. Forms a right-handed helical filament on oriC DNA; dsDNA binds to the exterior of the filament while single-stranded (ss)DNA is stabiized in the filament's interior. The ATP-DnaA-oriC complex binds and stabilizes one strand of the AT-rich DNA unwinding element (DUE), permitting loading of DNA polymerase. After initiation quickly degrades to an ADP-DnaA complex that is not apt for DNA replication. Binds acidic phospholipids. The sequence is that of Chromosomal replication initiator protein DnaA 1 from Chlamydia muridarum (strain MoPn / Nigg).